A 319-amino-acid chain; its full sequence is Acetyl-coenzyme A carboxylase carboxyl transferase subunit alpha (319 aa).

The region spanning 38–293 is the CoA carboxyltransferase C-terminal domain; the sequence is HALQDKLRLR…KAVLLNELDA (256 aa).

This sequence belongs to the AccA family. Acetyl-CoA carboxylase is a heterohexamer composed of biotin carboxyl carrier protein (AccB), biotin carboxylase (AccC) and two subunits each of ACCase subunit alpha (AccA) and ACCase subunit beta (AccD).

Its subcellular location is the cytoplasm. It catalyses the reaction N(6)-carboxybiotinyl-L-lysyl-[protein] + acetyl-CoA = N(6)-biotinyl-L-lysyl-[protein] + malonyl-CoA. The protein operates within lipid metabolism; malonyl-CoA biosynthesis; malonyl-CoA from acetyl-CoA: step 1/1. Its function is as follows. Component of the acetyl coenzyme A carboxylase (ACC) complex. First, biotin carboxylase catalyzes the carboxylation of biotin on its carrier protein (BCCP) and then the CO(2) group is transferred by the carboxyltransferase to acetyl-CoA to form malonyl-CoA. The chain is Acetyl-coenzyme A carboxylase carboxyl transferase subunit alpha from Stenotrophomonas maltophilia (strain R551-3).